The following is a 1530-amino-acid chain: Regulating synaptic membrane exocytosis protein 2 (1530 aa).

Residues 1-34 are disordered; the sequence is MSAPLGPRGRPAPTPAASQPPPQPEMPDLSHLTE. The segment covering 10–25 has biased composition (pro residues); it reads RPAPTPAASQPPPQPE. Positions 26-194 constitute a RabBD domain; it reads MPDLSHLTEE…TKSGAWFYNS (169 aa). The segment at 126-182 adopts an FYVE-type zinc-finger fold; the sequence is KGDAPTCGICHKTKFADGCGHNCSYCQTKFCARCGGRVSLRSNKVMWVCNLCRKQQE. Residues C132, C135, C148, C151, C156, C159, C174, and C177 each contribute to the Zn(2+) site. Disordered regions lie at residues 195–608 and 632–655; these read GSNT…ERQK and SGVD…HPVT. 5 stretches are compositionally biased toward basic and acidic residues: residues 210–225, 327–338, 357–375, 391–410, and 419–443; these read LRNE…KLHE, EPGHLNYRDSNR, RDEY…RYRS, EQMR…RHSD, and EDSR…RRAA. Residue S409 is modified to Phosphoserine. Residues 458–472 show a composition bias toward polar residues; the sequence is AQGQSSYPQRTSNHS. Basic and acidic residues predominate over residues 484-501; sequence DRPDMRRADSLRKQHHLD. The span at 519–530 shows a compositional bias: polar residues; that stretch reads RNDSLSSDQSES. Residues 537-546 show a composition bias toward basic residues; that stretch reads RPHKSKKGGK. Residues 567–577 are compositionally biased toward acidic residues; it reads SCDDVELESES. Composition is skewed to basic and acidic residues over residues 578–592 and 643–653; these read VSEK…RKTS and NEEHSHSDKHP. The PDZ domain maps to 677-763; it reads DGSVPRDSGA…EPQVELVVSR (87 aa). Residue T698 is modified to Phosphothreonine. The segment at 771-802 is disordered; it reads IPDSTHAQLESSSSSFESQKMDRPSISVTSPM. S800 and S803 each carry phosphoserine. Residues 814–937 form the C2 1 domain; it reads LSGQLSIKLW…ALLDDEPHWY (124 aa). 6 disordered regions span residues 948-982, 1003-1122, 1130-1149, 1154-1187, 1242-1263, and 1282-1307; these read PLPR…SEVS, LQSS…ERSA, RQMK…RLEQ, KYRS…SRTS, SLEK…TSGK, and KSRS…QRST. Positions 1003–1024 are enriched in polar residues; that stretch reads LQSSTLSVPEQVMSSNHCSPSG. Over residues 1067-1086 the composition is skewed to basic and acidic residues; it reads RMDRHRVMDDHYSSDRDRSH. Polar residues predominate over residues 1088–1101; that stretch reads RTGSVQTSPSSTPG. S1095 is modified (phosphoserine). Over residues 1154 to 1165 the composition is skewed to basic and acidic residues; it reads KYRSGWDPHRGA. At S1175 the chain carries Phosphoserine. The segment covering 1178–1187 has biased composition (low complexity); sequence SDVSAVSRTS. Position 1251 is a phosphoserine (S1251). Residues 1376 to 1494 enclose the C2 2 domain; that stretch reads AMGDIQVGMM…ELSNMVIGWF (119 aa). A phosphoserine mark is found at S1515 and S1518.

Interacts with TSPOAP1 and RIMBP2. Interacts with PPFIA3 and PPFIA4. Interacts via its zinc finger with the first C2 domain of UNC13A. Forms a complex consisting of UNC13A, RIMS2 and RAB3A. Heterodimer with PCLO. Part of a ternary complex involving PCLO and EPAC2. Interacts with RAB3A and RAB3B that have been activated by GTP-binding. Interacts with RAB3C, RAB3D and RAB26. In terms of tissue distribution, detected in testis, pituitary and an insulinoma cell line. Detected at low levels in cerebellar cortex.

The protein localises to the synapse. The protein resides in the synaptosome. Its function is as follows. Rab effector involved in exocytosis. May act as scaffold protein. Plays a role in dendrite formation by melanocytes. The sequence is that of Regulating synaptic membrane exocytosis protein 2 (Rims2) from Mus musculus (Mouse).